We begin with the raw amino-acid sequence, 43 residues long: Metallothionein-3 (43 aa).

This sequence belongs to the metallothionein superfamily. Type 5 family.

Functionally, this protein binds cations of several transition elements. Thought to be involved in metal ion homeostasis. The protein is Metallothionein-3 (MtnC) of Drosophila melanogaster (Fruit fly).